Reading from the N-terminus, the 86-residue chain is ATP synthase subunit c (86 aa).

The next 2 membrane-spanning stretches (helical) occupy residues Val8–Ile28 and Gly66–Leu86.

Belongs to the ATPase C chain family. In terms of assembly, F-type ATPases have 2 components, F(1) - the catalytic core - and F(0) - the membrane proton channel. F(1) has five subunits: alpha(3), beta(3), gamma(1), delta(1), epsilon(1). F(0) has three main subunits: a(1), b(2) and c(10-14). The alpha and beta chains form an alternating ring which encloses part of the gamma chain. F(1) is attached to F(0) by a central stalk formed by the gamma and epsilon chains, while a peripheral stalk is formed by the delta and b chains.

Its subcellular location is the cell membrane. In terms of biological role, f(1)F(0) ATP synthase produces ATP from ADP in the presence of a proton or sodium gradient. F-type ATPases consist of two structural domains, F(1) containing the extramembraneous catalytic core and F(0) containing the membrane proton channel, linked together by a central stalk and a peripheral stalk. During catalysis, ATP synthesis in the catalytic domain of F(1) is coupled via a rotary mechanism of the central stalk subunits to proton translocation. Its function is as follows. Key component of the F(0) channel; it plays a direct role in translocation across the membrane. A homomeric c-ring of between 10-14 subunits forms the central stalk rotor element with the F(1) delta and epsilon subunits. The polypeptide is ATP synthase subunit c (Natranaerobius thermophilus (strain ATCC BAA-1301 / DSM 18059 / JW/NM-WN-LF)).